Here is an 854-residue protein sequence, read N- to C-terminus: Armadillo repeat-containing protein 2 (854 aa).

Disordered stretches follow at residues 1–116, 140–194, and 206–255; these read MLSS…SFPK, QGML…PLLT, and EVSL…ETDT. Residues 58–73 are compositionally biased toward low complexity; the sequence is PASSRSPENRPPSSFS. 2 stretches are compositionally biased toward polar residues: residues 74 to 87 and 162 to 187; these read LHASSFELSDSKPI and KPVSVGSSTARRNGTHLTASSATGQL. ARM repeat units lie at residues 255–294, 298–337, 356–396, 401–442, 455–496, 499–540, 544–583, 585–605, 606–649, 651–692, 694–733, and 735–777; these read TEVDEVFWKARIVPILHELENEEDIEEMCAACTQLHRTLE, MLGKKFKRRTVLLKALYKLVDADSDPLSLKLAKLILALKV, EKND…ALKF, PGFL…HLLV, PLTR…KLTS, DCCA…NLTA, QARELFSRETGSVETLLTLFQSFYHHKENSPKLQLSEAKP, AEAEDVLVKLTRVLANIAIHP, RIGP…NLSF, QVKS…NLSQ, HDVCNFLMQKNVHKFMITLLEAKHQDICFSACGVLLNLTV, and KEKR…NFSE.

Its function is as follows. Required for sperm flagellum axoneme organization and function. Involved in axonemal central pair complex assembly and/or stability. This Mus musculus (Mouse) protein is Armadillo repeat-containing protein 2.